We begin with the raw amino-acid sequence, 434 residues long: Putative ankyrin repeat protein FPV219 (434 aa).

ANK repeat units follow at residues 33 to 62, 66 to 95, 101 to 131, 132 to 161, 165 to 195, 196 to 225, and 229 to 258; these read DDLS…DVNL, EVCS…DTDC, HGTP…HEIY, TKNH…DVNT, LYGY…ESYS, LYPS…DVNA, and EGNT…DTSI.

The polypeptide is Putative ankyrin repeat protein FPV219 (Fowlpox virus (strain NVSL) (FPV)).